The chain runs to 197 residues: MTAITITDAAHDYLADLLEKQNTPGIGIRVFITQPGTQYAETCIAYCKPGEEKPEDKAIGLKSFTAWIDGFSEAFLDDAVVDYATDRMGGQLTIKAPNAKVPMVNADSPINERINYYLQTEINPGLASHGGQVTLIDVVEEETKNIAVLQFGGGCQGCGQADVTLKEGIERTLLERIPELSGVRDVTDHTQKENAYY.

2 residues coordinate [4Fe-4S] cluster: Cys155 and Cys158.

Belongs to the NfuA family. Homodimer. It depends on [4Fe-4S] cluster as a cofactor.

Functionally, involved in iron-sulfur cluster biogenesis. Binds a 4Fe-4S cluster, can transfer this cluster to apoproteins, and thereby intervenes in the maturation of Fe/S proteins. Could also act as a scaffold/chaperone for damaged Fe/S proteins. This chain is Fe/S biogenesis protein NfuA, found in Pseudomonas syringae pv. syringae (strain B728a).